The following is a 502-amino-acid chain: Lysine--tRNA ligase (502 aa).

Mg(2+) is bound by residues Glu-412 and Glu-419.

The protein belongs to the class-II aminoacyl-tRNA synthetase family. Homodimer. Requires Mg(2+) as cofactor.

The protein localises to the cytoplasm. It carries out the reaction tRNA(Lys) + L-lysine + ATP = L-lysyl-tRNA(Lys) + AMP + diphosphate. This Histophilus somni (strain 2336) (Haemophilus somnus) protein is Lysine--tRNA ligase.